We begin with the raw amino-acid sequence, 131 residues long: Major pollen allergen Pla l 1 (131 aa).

Disulfide bonds link Cys-17–Cys-86, Cys-20–Cys-131, and Cys-42–Cys-74. Positions 21, 45, 73, and 88 each coordinate Zn(2+). N-linked (GlcNAc...) asparagine glycosylation is present at Asn-107.

Belongs to the Ole e I family. In terms of processing, exists in two variants: glycosylated and non-glycosylated. Carries a complex, major N-linked glycan, with a alpha-1,3-fucose residue in its structure and probably also a beta-1,2-xylose. The average modification of molecular mass due to glycosylation is approximately 969 Da.

Its subcellular location is the secreted. The chain is Major pollen allergen Pla l 1 from Plantago lanceolata (English plantain).